The primary structure comprises 91 residues: Class I hydrophobin E (91 aa).

The first 16 residues, 1–16 (MKFSIAAIALAAVAVA), serve as a signal peptide directing secretion. Disulfide bonds link cysteine 30–cysteine 72, cysteine 42–cysteine 64, cysteine 43–cysteine 55, and cysteine 73–cysteine 89. Asparagine 83 is a glycosylation site (N-linked (GlcNAc...) asparagine).

Belongs to the fungal hydrophobin family.

The protein resides in the secreted. Its subcellular location is the cell wall. It localises to the vacuole. It is found in the cytoplasmic vesicle. In terms of biological role, aerial growth, conidiation, and dispersal of filamentous fungi in the environment rely upon a capability of their secreting small amphipathic proteins called hydrophobins (HPBs) with low sequence identity. Class I can self-assemble into an outermost layer of rodlet bundles on aerial cell surfaces, conferring cellular hydrophobicity that supports fungal growth, development and dispersal; whereas Class II form highly ordered films at water-air interfaces through intermolecular interactions but contribute nothing to the rodlet structure. Hyd1E contributes to certain cell wall-related features, such as hydrophobicity but is not involved in cell wall-related events during fungal proliferation in host hemocoel. Does not contribute to conidial hydrophobicity. In Beauveria bassiana (strain ARSEF 2860) (White muscardine disease fungus), this protein is Class I hydrophobin E.